Consider the following 472-residue polypeptide: Trigger factor (472 aa).

One can recognise a PPIase FKBP-type domain in the interval 174–261 (GDIALVSFKG…LEDLKIKELP (88 aa)). Positions 438 to 472 (EKTPEKARDQIKEKSSKKKTTKTNKEKKSSKTPKS) are disordered. The segment covering 439 to 451 (KTPEKARDQIKEK) has biased composition (basic and acidic residues).

Belongs to the FKBP-type PPIase family. Tig subfamily.

Its subcellular location is the cytoplasm. The catalysed reaction is [protein]-peptidylproline (omega=180) = [protein]-peptidylproline (omega=0). In terms of biological role, involved in protein export. Acts as a chaperone by maintaining the newly synthesized protein in an open conformation. Functions as a peptidyl-prolyl cis-trans isomerase. The protein is Trigger factor of Prochlorococcus marinus (strain NATL2A).